The primary structure comprises 413 residues: Serine hydroxymethyltransferase (413 aa).

Residues L119 and G123–L125 each bind (6S)-5,6,7,8-tetrahydrofolate. Position 228 is an N6-(pyridoxal phosphate)lysine (K228). A (6S)-5,6,7,8-tetrahydrofolate-binding site is contributed by S351–F353.

This sequence belongs to the SHMT family. In terms of assembly, homodimer. Pyridoxal 5'-phosphate serves as cofactor.

It is found in the cytoplasm. It catalyses the reaction (6R)-5,10-methylene-5,6,7,8-tetrahydrofolate + glycine + H2O = (6S)-5,6,7,8-tetrahydrofolate + L-serine. It participates in one-carbon metabolism; tetrahydrofolate interconversion. The protein operates within amino-acid biosynthesis; glycine biosynthesis; glycine from L-serine: step 1/1. Catalyzes the reversible interconversion of serine and glycine with tetrahydrofolate (THF) serving as the one-carbon carrier. This reaction serves as the major source of one-carbon groups required for the biosynthesis of purines, thymidylate, methionine, and other important biomolecules. Also exhibits THF-independent aldolase activity toward beta-hydroxyamino acids, producing glycine and aldehydes, via a retro-aldol mechanism. The sequence is that of Serine hydroxymethyltransferase from Clostridium botulinum (strain Okra / Type B1).